The primary structure comprises 58 residues: UPF0337 protein OB2685 (58 aa).

Basic and acidic residues-rich tracts occupy residues 1 to 22 (MSDGMKDKAKAIGKKIKGEAKD) and 30 to 46 (DPQRKAEGKRDKAKGEA). The disordered stretch occupies residues 1–58 (MSDGMKDKAKAIGKKIKGEAKDQWGSATDDPQRKAEGKRDKAKGEAQDTIADAKNNNK).

This sequence belongs to the UPF0337 (CsbD) family.

This Oceanobacillus iheyensis (strain DSM 14371 / CIP 107618 / JCM 11309 / KCTC 3954 / HTE831) protein is UPF0337 protein OB2685.